Consider the following 118-residue polypeptide: MKQAIREKVKKKRRREKNTSGKYKGLYILFRLAADDFTYSAFFYLSKRSKEEHTTSAANLHPRKKKRMPPRRAEKNKAPNHHPSFFLRVIPATFVLPDNILIILCSDSDLFFVAEAIS.

Residues 49 to 80 form a disordered region; that stretch reads SKEEHTTSAANLHPRKKKRMPPRRAEKNKAPN. Residues 61–70 are compositionally biased toward basic residues; the sequence is HPRKKKRMPP.

This is an uncharacterized protein from Saccharomyces cerevisiae (strain ATCC 204508 / S288c) (Baker's yeast).